The chain runs to 250 residues: Cytochrome c oxidase subunit 2 (250 aa).

Residues 1–39 lie on the Mitochondrial intermembrane side of the membrane; it reads MFFLINKLVMNFDAPSPWGIYFQDSATPQMEGLNELHDN. A helical membrane pass occupies residues 40 to 60; sequence IMYYLVVILFAVGWILLSIVI. The Mitochondrial matrix portion of the chain corresponds to 61–81; the sequence is NYVSTKSPISHKYLNHGTLIE. Residues 82–104 form a helical membrane-spanning segment; that stretch reads LIWTITPAVILILIAFPSFKLLY. Residues 105–250 are Mitochondrial intermembrane-facing; that stretch reads LMDEVSDPSM…EKFLIWLKEQ (146 aa). Residues H185, C220, E222, C224, H228, and M231 each coordinate Cu cation. Residue E222 coordinates Mg(2+).

The protein belongs to the cytochrome c oxidase subunit 2 family. Component of the cytochrome c oxidase (complex IV, CIV), a multisubunit enzyme composed of a catalytic core of 3 subunits and several supernumerary subunits. The complex exists as a monomer or a dimer and forms supercomplexes (SCs) in the inner mitochondrial membrane with ubiquinol-cytochrome c oxidoreductase (cytochrome b-c1 complex, complex III, CIII). Requires Cu cation as cofactor.

It localises to the mitochondrion inner membrane. The catalysed reaction is 4 Fe(II)-[cytochrome c] + O2 + 8 H(+)(in) = 4 Fe(III)-[cytochrome c] + 2 H2O + 4 H(+)(out). Functionally, component of the cytochrome c oxidase, the last enzyme in the mitochondrial electron transport chain which drives oxidative phosphorylation. The respiratory chain contains 3 multisubunit complexes succinate dehydrogenase (complex II, CII), ubiquinol-cytochrome c oxidoreductase (cytochrome b-c1 complex, complex III, CIII) and cytochrome c oxidase (complex IV, CIV), that cooperate to transfer electrons derived from NADH and succinate to molecular oxygen, creating an electrochemical gradient over the inner membrane that drives transmembrane transport and the ATP synthase. Cytochrome c oxidase is the component of the respiratory chain that catalyzes the reduction of oxygen to water. Electrons originating from reduced cytochrome c in the intermembrane space (IMS) are transferred via the dinuclear copper A center (CU(A)) of subunit 2 and heme A of subunit 1 to the active site in subunit 1, a binuclear center (BNC) formed by heme A3 and copper B (CU(B)). The BNC reduces molecular oxygen to 2 water molecules using 4 electrons from cytochrome c in the IMS and 4 protons from the mitochondrial matrix. The polypeptide is Cytochrome c oxidase subunit 2 (COII) (Podospora anserina (strain S / ATCC MYA-4624 / DSM 980 / FGSC 10383) (Pleurage anserina)).